The following is a 166-amino-acid chain: Flagellar assembly factor FliW (166 aa).

The protein belongs to the FliW family. In terms of assembly, interacts with translational regulator CsrA and flagellin(s).

It is found in the cytoplasm. Acts as an anti-CsrA protein, binds CsrA and prevents it from repressing translation of its target genes, one of which is flagellin. Binds to flagellin and participates in the assembly of the flagellum. This chain is Flagellar assembly factor FliW, found in Desulfovibrio desulfuricans (strain ATCC 27774 / DSM 6949 / MB).